The primary structure comprises 99 residues: Large ribosomal subunit protein uL23 (99 aa).

Belongs to the universal ribosomal protein uL23 family. As to quaternary structure, part of the 50S ribosomal subunit. Contacts protein L29, and trigger factor when it is bound to the ribosome.

In terms of biological role, one of the early assembly proteins it binds 23S rRNA. One of the proteins that surrounds the polypeptide exit tunnel on the outside of the ribosome. Forms the main docking site for trigger factor binding to the ribosome. The protein is Large ribosomal subunit protein uL23 of Stenotrophomonas maltophilia (strain R551-3).